Reading from the N-terminus, the 298-residue chain is Octopine catabolism/uptake operon regulatory protein OccR (298 aa).

Residues 1–58 (MNLRQVEAFRAVMLTGQMTAAAELMLVTQPAISRLIKDFEQATKLQLFERRGNHIIPT) enclose the HTH lysR-type domain. Residues 18 to 37 (MTAAAELMLVTQPAISRLIK) constitute a DNA-binding region (H-T-H motif).

It belongs to the LysR transcriptional regulatory family.

Its function is as follows. Positive regulatory protein for the occ operon involved in octopine catabolism and uptake. Also acts as a negative regulator of its expression. The sequence is that of Octopine catabolism/uptake operon regulatory protein OccR (occR) from Agrobacterium tumefaciens (strain Ach5).